A 518-amino-acid polypeptide reads, in one-letter code: Vesicular inhibitory amino acid transporter (518 aa).

The Cytoplasmic segment spans residues methionine 1–methionine 125. The segment at glutamate 66–cysteine 98 is disordered. Residues phenylalanine 126–isoleucine 146 traverse the membrane as a helical segment. Over phenylalanine 147–arginine 197 the chain is Lumenal, vesicle. A helical transmembrane segment spans residues valine 198–serine 218. Over glycine 219–lysine 258 the chain is Cytoplasmic. A helical membrane pass occupies residues phenylalanine 259 to leucine 279. Over serine 280–lysine 298 the chain is Lumenal, vesicle. Residues phenylalanine 299–leucine 319 form a helical membrane-spanning segment. Residues glutamate 320–asparagine 334 are Cytoplasmic-facing. A helical transmembrane segment spans residues tryptophan 335 to tryptophan 355. At alanine 356–asparagine 376 the chain is on the lumenal, vesicle side. The chain crosses the membrane as a helical span at residues leucine 377 to valine 397. Topologically, residues leucine 398–alanine 431 are cytoplasmic. A helical membrane pass occupies residues leucine 432–leucine 452. The Lumenal, vesicle portion of the chain corresponds to threonine 453–glycine 454. A helical transmembrane segment spans residues serine 455 to tryptophan 475. Residues arginine 476–glutamine 482 lie on the Cytoplasmic side of the membrane. Residues valine 483–histidine 503 traverse the membrane as a helical segment. Residues serine 504 to aspartate 518 lie on the Lumenal, vesicle side of the membrane.

It belongs to the amino acid/polyamine transporter 2 family.

The protein resides in the cytoplasmic vesicle membrane. It localises to the presynapse. It carries out the reaction 4-aminobutanoate(out) + n H(+)(in) = 4-aminobutanoate(in) + n H(+)(out). It catalyses the reaction glycine(out) + n H(+)(in) = glycine(in) + n H(+)(out). The enzyme catalyses beta-alanine(out) + n H(+)(in) = beta-alanine(in) + n H(+)(out). Its function is as follows. Antiporter that exchanges vesicular protons for cytosolic 4-aminobutanoate or to a lesser extend glycine, thus allowing their secretion from nerve terminals. The transport is equally dependent on the chemical and electrical components of the proton gradient. May also transport beta-alanine. Acidification of GABAergic synaptic vesicles is a prerequisite for 4-aminobutanoate uptake. The chain is Vesicular inhibitory amino acid transporter from Xenopus tropicalis (Western clawed frog).